We begin with the raw amino-acid sequence, 479 residues long: Octopamine receptor (479 aa).

Residues 1-57 (MGQAATHDANNYTSINYTEIYDVIEDEKDVCAVADEPNIPCSFGISLAVPEWEAICT) lie on the Extracellular side of the membrane. N-linked (GlcNAc...) asparagine glycosylation is found at Asn-11 and Asn-16. Residues 58-80 (AIILTMIIISTVVGNILVILSVF) form a helical membrane-spanning segment. The Cytoplasmic portion of the chain corresponds to 81 to 90 (TYKPLRIVQN). A helical transmembrane segment spans residues 91-112 (FFIVSLAVADLTVAILVLPLNV). Topologically, residues 113–129 (AYSILGQWVFGIYVCKM) are extracellular. A helical transmembrane segment spans residues 130 to 150 (WLTCDIMCCTSSILNLCAIAL). Residues 151–170 (DRYWAITDPINYAQKRTLER) are Cytoplasmic-facing. Residues 171–193 (VLFMIGIVWILSLVISSPPLLGW) traverse the membrane as a helical segment. Over 194 to 218 (NDWPEVFEPDTPCRLTSQPGFVIFS) the chain is Extracellular. Residues 219 to 240 (SSGSFYIPLVIMTVVYFEIYLA) traverse the membrane as a helical segment. Topologically, residues 241–407 (TKKRLRDRAK…LTRERRAART (167 aa)) are cytoplasmic. The tract at residues 260-319 (GRNKYETKESDPNDQDSVSSDANPNEHQGGTRLVAENEKKHRTRKLTPKKKPKRRYWSKD) is disordered. Positions 274–287 (QDSVSSDANPNEHQ) are enriched in polar residues. The segment covering 299–315 (KHRTRKLTPKKKPKRRY) has biased composition (basic residues). Residues 408–429 (LGIIMGVFVVCWLPFFVIYLVI) form a helical membrane-spanning segment. The Extracellular portion of the chain corresponds to 430 to 441 (PFCVSCCLSNKF). Residues 442–462 (INFITWLGYVNSALNPLIYTI) form a helical membrane-spanning segment. At 463-479 (FNMDFRRAFKKLLFIKC) the chain is on the cytoplasmic side.

It belongs to the G-protein coupled receptor 1 family.

The protein localises to the cell membrane. In terms of biological role, receptor for octopamine. Octopamine (OA) is a neurotransmitter, neurohormone, and neuromodulator in invertebrates. The activity of this receptor is mediated by G proteins which activate adenylyl cyclase. The sequence is that of Octopamine receptor from Bombyx mori (Silk moth).